The primary structure comprises 92 residues: Cell division protein FtsB (92 aa).

The Cytoplasmic portion of the chain corresponds to 1–3 (MRF). The chain crosses the membrane as a helical span at residues 4-21 (FQVGLLCLALFVQYRLWF). The Periplasmic segment spans residues 22–92 (GHNGVQDYTR…TFIRVLPAQQ (71 aa)). A coiled-coil region spans residues 40-73 (LQTNEKLIKRNKVLTADIEDLKLGHEGIEERARN).

It belongs to the FtsB family. As to quaternary structure, part of a complex composed of FtsB, FtsL and FtsQ.

The protein localises to the cell inner membrane. Essential cell division protein. May link together the upstream cell division proteins, which are predominantly cytoplasmic, with the downstream cell division proteins, which are predominantly periplasmic. In Pseudoalteromonas translucida (strain TAC 125), this protein is Cell division protein FtsB.